Here is a 376-residue protein sequence, read N- to C-terminus: Protein RecA (376 aa).

Residue 78 to 85 (GPESSGKT) participates in ATP binding. The segment at 355–376 (PVELVPNVDFDDEADTEADAED) is disordered. The span at 363–376 (DFDDEADTEADAED) shows a compositional bias: acidic residues.

This sequence belongs to the RecA family.

It localises to the cytoplasm. Its function is as follows. Can catalyze the hydrolysis of ATP in the presence of single-stranded DNA, the ATP-dependent uptake of single-stranded DNA by duplex DNA, and the ATP-dependent hybridization of homologous single-stranded DNAs. It interacts with LexA causing its activation and leading to its autocatalytic cleavage. This is Protein RecA from Corynebacterium glutamicum (strain R).